We begin with the raw amino-acid sequence, 432 residues long: Negative regulator of systemic acquired resistance SNI1 (432 aa).

In terms of assembly, interacts with SSN2. Binds to NTL9/CBNAC to promote its binding to promoters of target genes. Component of the SMC5-SMC6 complex which consists at least of SMC5 and SMC6B. Interacts with RAD17. As to expression, expressed at low levels in the veins.

It is found in the nucleus. Its function is as follows. Component of the SMC5-SMC6 complex, a complex involved in repair of DNA double-strand breaks by homologous recombination. Transcription repressor that prevents expression of pathogenesis-related genes (PR) via histone modifications and binding negative cis-acting elements at their promoters. Negative regulator of hypersensitive response (HR) and systemic acquired resistance (SAR) required to dampen the basal expression of pathogenesis related (PR) genes. Functions synergistically with NTL9/CBNAC as negative regulator of pathogen-induced PR1 expression and basal resistance to a virulent strain of P.syringae. Binds to the PR1 gene promoter to suppress defense response in the absence of pathogen challenge and is removed in response to induction. Negatively regulates both gene expression and DNA recombination during pathogen infection, thus being involved in short-term defense response and a long-term survival strategy. Prevents effective immune responses that involve activation of DNA damage responses, probably by negatively regulating the DNA damage sensors RAD17 and ATR. Negative regulator of defenses against the beet cyst nematode H.schachtii. In Arabidopsis thaliana (Mouse-ear cress), this protein is Negative regulator of systemic acquired resistance SNI1.